Reading from the N-terminus, the 147-residue chain is 3-dehydroquinate dehydratase (147 aa).

Catalysis depends on tyrosine 23, which acts as the Proton acceptor. Residues asparagine 75, histidine 81, and aspartate 88 each coordinate substrate. Residue histidine 101 is the Proton donor of the active site. Substrate is bound by residues 102-103 (LS) and arginine 112.

It belongs to the type-II 3-dehydroquinase family. As to quaternary structure, homododecamer.

It carries out the reaction 3-dehydroquinate = 3-dehydroshikimate + H2O. It functions in the pathway metabolic intermediate biosynthesis; chorismate biosynthesis; chorismate from D-erythrose 4-phosphate and phosphoenolpyruvate: step 3/7. Catalyzes a trans-dehydration via an enolate intermediate. This Stutzerimonas stutzeri (strain A1501) (Pseudomonas stutzeri) protein is 3-dehydroquinate dehydratase.